The chain runs to 173 residues: Translation initiation factor IF-3 (173 aa).

Belongs to the IF-3 family. As to quaternary structure, monomer.

It localises to the cytoplasm. In terms of biological role, IF-3 binds to the 30S ribosomal subunit and shifts the equilibrium between 70S ribosomes and their 50S and 30S subunits in favor of the free subunits, thus enhancing the availability of 30S subunits on which protein synthesis initiation begins. The chain is Translation initiation factor IF-3 from Ehrlichia ruminantium (strain Gardel).